Consider the following 90-residue polypeptide: N(2)-fixation sustaining protein CowN (90 aa).

It belongs to the CowN family.

Its function is as follows. Is required to sustain N(2)-dependent growth in the presence of low levels of carbon monoxide (CO). Probably acts by protecting the N(2) fixation ability of the nitrogenase complex, which is inactivated in the presence of CO. In Halorhodospira halophila (strain DSM 244 / SL1) (Ectothiorhodospira halophila (strain DSM 244 / SL1)), this protein is N(2)-fixation sustaining protein CowN.